The chain runs to 256 residues: Pyridoxine 5'-phosphate synthase (256 aa).

Residue N10 participates in 3-amino-2-oxopropyl phosphate binding. 12 to 13 (DH) contributes to the 1-deoxy-D-xylulose 5-phosphate binding site. R21 provides a ligand contact to 3-amino-2-oxopropyl phosphate. The active-site Proton acceptor is H46. 2 residues coordinate 1-deoxy-D-xylulose 5-phosphate: R48 and H53. The active-site Proton acceptor is E73. T103 is a binding site for 1-deoxy-D-xylulose 5-phosphate. H193 functions as the Proton donor in the catalytic mechanism. Residues G194 and 215–216 (GH) each bind 3-amino-2-oxopropyl phosphate.

This sequence belongs to the PNP synthase family. In terms of assembly, homooctamer; tetramer of dimers.

It localises to the cytoplasm. It carries out the reaction 3-amino-2-oxopropyl phosphate + 1-deoxy-D-xylulose 5-phosphate = pyridoxine 5'-phosphate + phosphate + 2 H2O + H(+). Its pathway is cofactor biosynthesis; pyridoxine 5'-phosphate biosynthesis; pyridoxine 5'-phosphate from D-erythrose 4-phosphate: step 5/5. Its function is as follows. Catalyzes the complicated ring closure reaction between the two acyclic compounds 1-deoxy-D-xylulose-5-phosphate (DXP) and 3-amino-2-oxopropyl phosphate (1-amino-acetone-3-phosphate or AAP) to form pyridoxine 5'-phosphate (PNP) and inorganic phosphate. The protein is Pyridoxine 5'-phosphate synthase of Zymomonas mobilis subsp. mobilis (strain ATCC 31821 / ZM4 / CP4).